Reading from the N-terminus, the 199-residue chain is NAD(P)H dehydrogenase (quinone) (199 aa).

One can recognise a Flavodoxin-like domain in the interval 4–190 (MLVLYYSAYG…DGARFQGRRV (187 aa)). FMN-binding positions include 10–15 (SAYGHM) and 78–80 (TRY). Y12 contacts NAD(+). Residue W98 coordinates substrate. Residues 113-119 (STATQYG) and H134 each bind FMN. Residues 161–181 (YGMTTTADGDGSRQPSAQELD) form a disordered region. Positions 163 to 177 (MTTTADGDGSRQPSA) are enriched in polar residues.

Belongs to the WrbA family. It depends on FMN as a cofactor.

The catalysed reaction is a quinone + NADH + H(+) = a quinol + NAD(+). It catalyses the reaction a quinone + NADPH + H(+) = a quinol + NADP(+). This chain is NAD(P)H dehydrogenase (quinone), found in Brucella canis (strain ATCC 23365 / NCTC 10854 / RM-666).